Reading from the N-terminus, the 385-residue chain is S-adenosylmethionine synthase (385 aa).

His-15 serves as a coordination point for ATP. Asp-17 provides a ligand contact to Mg(2+). Glu-43 contacts K(+). L-methionine-binding residues include Glu-56 and Gln-99. The tract at residues Gln-99–Asn-109 is flexible loop. ATP contacts are provided by residues Asp-164–Lys-166, Arg-230–Phe-231, Asp-239, Arg-245–Lys-246, Ala-262, and Lys-266. Asp-239 serves as a coordination point for L-methionine. Lys-270 serves as a coordination point for L-methionine.

This sequence belongs to the AdoMet synthase family. As to quaternary structure, homotetramer; dimer of dimers. Requires Mg(2+) as cofactor. It depends on K(+) as a cofactor.

Its subcellular location is the cytoplasm. The catalysed reaction is L-methionine + ATP + H2O = S-adenosyl-L-methionine + phosphate + diphosphate. The protein operates within amino-acid biosynthesis; S-adenosyl-L-methionine biosynthesis; S-adenosyl-L-methionine from L-methionine: step 1/1. Catalyzes the formation of S-adenosylmethionine (AdoMet) from methionine and ATP. The overall synthetic reaction is composed of two sequential steps, AdoMet formation and the subsequent tripolyphosphate hydrolysis which occurs prior to release of AdoMet from the enzyme. This chain is S-adenosylmethionine synthase, found in Baumannia cicadellinicola subsp. Homalodisca coagulata.